Consider the following 226-residue polypeptide: Orotate phosphoribosyltransferase (226 aa).

K29 lines the 5-phospho-alpha-D-ribose 1-diphosphate pocket. Residue 37–38 coordinates orotate; that stretch reads FF. 5-phospho-alpha-D-ribose 1-diphosphate contacts are provided by residues 75–76, R101, K102, K105, H107, and 126–134; these read YK and DDVISAGTS. Orotate is bound by residues S130 and R158.

It belongs to the purine/pyrimidine phosphoribosyltransferase family. PyrE subfamily. Homodimer. Mg(2+) is required as a cofactor.

The enzyme catalyses orotidine 5'-phosphate + diphosphate = orotate + 5-phospho-alpha-D-ribose 1-diphosphate. It participates in pyrimidine metabolism; UMP biosynthesis via de novo pathway; UMP from orotate: step 1/2. Catalyzes the transfer of a ribosyl phosphate group from 5-phosphoribose 1-diphosphate to orotate, leading to the formation of orotidine monophosphate (OMP). The chain is Orotate phosphoribosyltransferase from Ralstonia nicotianae (strain ATCC BAA-1114 / GMI1000) (Ralstonia solanacearum).